Reading from the N-terminus, the 294-residue chain is UDP-3-O-acyl-N-acetylglucosamine deacetylase (294 aa).

Zn(2+) contacts are provided by H75, H232, and D236. H259 serves as the catalytic Proton donor.

This sequence belongs to the LpxC family. Zn(2+) serves as cofactor.

It catalyses the reaction a UDP-3-O-[(3R)-3-hydroxyacyl]-N-acetyl-alpha-D-glucosamine + H2O = a UDP-3-O-[(3R)-3-hydroxyacyl]-alpha-D-glucosamine + acetate. It participates in glycolipid biosynthesis; lipid IV(A) biosynthesis; lipid IV(A) from (3R)-3-hydroxytetradecanoyl-[acyl-carrier-protein] and UDP-N-acetyl-alpha-D-glucosamine: step 2/6. Its function is as follows. Catalyzes the hydrolysis of UDP-3-O-myristoyl-N-acetylglucosamine to form UDP-3-O-myristoylglucosamine and acetate, the committed step in lipid A biosynthesis. The chain is UDP-3-O-acyl-N-acetylglucosamine deacetylase from Campylobacter jejuni subsp. jejuni serotype O:6 (strain 81116 / NCTC 11828).